Here is a 253-residue protein sequence, read N- to C-terminus: ATP synthase subunit b 1 (253 aa).

The chain crosses the membrane as a helical span at residues 5–27 (GWTVALQAVNFLILVLLLRHFLY).

Belongs to the ATPase B chain family. As to quaternary structure, F-type ATPases have 2 components, F(1) - the catalytic core - and F(0) - the membrane proton channel. F(1) has five subunits: alpha(3), beta(3), gamma(1), delta(1), epsilon(1). F(0) has three main subunits: a(1), b(2) and c(10-14). The alpha and beta chains form an alternating ring which encloses part of the gamma chain. F(1) is attached to F(0) by a central stalk formed by the gamma and epsilon chains, while a peripheral stalk is formed by the delta and b chains.

It localises to the cell inner membrane. In terms of biological role, f(1)F(0) ATP synthase produces ATP from ADP in the presence of a proton or sodium gradient. F-type ATPases consist of two structural domains, F(1) containing the extramembraneous catalytic core and F(0) containing the membrane proton channel, linked together by a central stalk and a peripheral stalk. During catalysis, ATP synthesis in the catalytic domain of F(1) is coupled via a rotary mechanism of the central stalk subunits to proton translocation. Component of the F(0) channel, it forms part of the peripheral stalk, linking F(1) to F(0). In Rhodospirillum centenum (strain ATCC 51521 / SW), this protein is ATP synthase subunit b 1.